Reading from the N-terminus, the 407-residue chain is Eukaryotic initiation factor 4A-II (407 aa).

The interval 1-22 is disordered; sequence MSGGSADYNREHGGPEGMDPDG. A Q motif motif is present at residues 33–61; it reads DNFDDMNLKESLLRGIYAYGFEKPSAIQQ. The Helicase ATP-binding domain maps to 64–235; sequence IIPCIKGYDV…KKFMRDPIRI (172 aa). 77-84 is an ATP binding site; the sequence is AQSGTGKT. At threonine 159 the chain carries Phosphothreonine. Residues 183 to 186 carry the DEAD box motif; sequence DEAD. Positions 246–407 constitute a Helicase C-terminal domain; it reads GIKQFYINVE…EMPMNVADLI (162 aa).

It belongs to the DEAD box helicase family. eIF4A subfamily. EIF4F is a multi-subunit complex, the composition of which varies with external and internal environmental conditions. It is composed of at least EIF4A, EIF4E and EIF4G1/EIFFG3. Interacts with EIF4E. May interact with NOM1.

The enzyme catalyses ATP + H2O = ADP + phosphate + H(+). Functionally, ATP-dependent RNA helicase which is a subunit of the eIF4F complex involved in cap recognition and is required for mRNA binding to ribosome. In the current model of translation initiation, eIF4A unwinds RNA secondary structures in the 5'-UTR of mRNAs which is necessary to allow efficient binding of the small ribosomal subunit, and subsequent scanning for the initiator codon. In Bos taurus (Bovine), this protein is Eukaryotic initiation factor 4A-II (EIF4A2).